Reading from the N-terminus, the 427-residue chain is 3-phosphoshikimate 1-carboxyvinyltransferase (427 aa).

3-phosphoshikimate is bound by residues Lys-20, Ser-21, and Arg-25. Lys-20 is a binding site for phosphoenolpyruvate. Residues Gly-92 and Arg-120 each coordinate phosphoenolpyruvate. Ser-166, Gln-168, Asp-312, and Lys-339 together coordinate 3-phosphoshikimate. Gln-168 provides a ligand contact to phosphoenolpyruvate. Asp-312 functions as the Proton acceptor in the catalytic mechanism. Phosphoenolpyruvate contacts are provided by Arg-343 and Arg-385.

This sequence belongs to the EPSP synthase family. In terms of assembly, monomer.

It localises to the cytoplasm. The enzyme catalyses 3-phosphoshikimate + phosphoenolpyruvate = 5-O-(1-carboxyvinyl)-3-phosphoshikimate + phosphate. Its pathway is metabolic intermediate biosynthesis; chorismate biosynthesis; chorismate from D-erythrose 4-phosphate and phosphoenolpyruvate: step 6/7. In terms of biological role, catalyzes the transfer of the enolpyruvyl moiety of phosphoenolpyruvate (PEP) to the 5-hydroxyl of shikimate-3-phosphate (S3P) to produce enolpyruvyl shikimate-3-phosphate and inorganic phosphate. In Streptococcus mutans serotype c (strain ATCC 700610 / UA159), this protein is 3-phosphoshikimate 1-carboxyvinyltransferase.